The following is a 274-amino-acid chain: Diaminopimelate epimerase (274 aa).

Asn11, Gln44, and Asn64 together coordinate substrate. Cys73 functions as the Proton donor in the catalytic mechanism. Substrate is bound by residues 74–75 (GN), Asn157, Asn190, and 208–209 (ER). Cys217 acts as the Proton acceptor in catalysis. Residue 218–219 (GS) coordinates substrate.

This sequence belongs to the diaminopimelate epimerase family. In terms of assembly, homodimer.

It is found in the cytoplasm. The enzyme catalyses (2S,6S)-2,6-diaminopimelate = meso-2,6-diaminopimelate. The protein operates within amino-acid biosynthesis; L-lysine biosynthesis via DAP pathway; DL-2,6-diaminopimelate from LL-2,6-diaminopimelate: step 1/1. Catalyzes the stereoinversion of LL-2,6-diaminopimelate (L,L-DAP) to meso-diaminopimelate (meso-DAP), a precursor of L-lysine and an essential component of the bacterial peptidoglycan. This is Diaminopimelate epimerase from Sodalis glossinidius (strain morsitans).